The sequence spans 269 residues: Ribosomal RNA small subunit methyltransferase J (269 aa).

S-adenosyl-L-methionine contacts are provided by residues 125 to 126 (ER) and D179.

This sequence belongs to the methyltransferase superfamily. RsmJ family.

The protein resides in the cytoplasm. It carries out the reaction guanosine(1516) in 16S rRNA + S-adenosyl-L-methionine = N(2)-methylguanosine(1516) in 16S rRNA + S-adenosyl-L-homocysteine + H(+). Specifically methylates the guanosine in position 1516 of 16S rRNA. The sequence is that of Ribosomal RNA small subunit methyltransferase J from Pseudomonas syringae pv. syringae (strain B728a).